A 101-amino-acid polypeptide reads, in one-letter code: Small ribosomal subunit protein uS14 (101 aa).

The protein belongs to the universal ribosomal protein uS14 family. In terms of assembly, part of the 30S ribosomal subunit. Contacts proteins S3 and S10.

In terms of biological role, binds 16S rRNA, required for the assembly of 30S particles and may also be responsible for determining the conformation of the 16S rRNA at the A site. The polypeptide is Small ribosomal subunit protein uS14 (Synechococcus sp. (strain JA-3-3Ab) (Cyanobacteria bacterium Yellowstone A-Prime)).